The chain runs to 159 residues: Ribosomal RNA large subunit methyltransferase H (159 aa).

Residues leucine 76, glycine 108, and 127–132 each bind S-adenosyl-L-methionine; that span reads FSKMTF.

This sequence belongs to the RNA methyltransferase RlmH family. Homodimer.

It localises to the cytoplasm. The catalysed reaction is pseudouridine(1915) in 23S rRNA + S-adenosyl-L-methionine = N(3)-methylpseudouridine(1915) in 23S rRNA + S-adenosyl-L-homocysteine + H(+). Functionally, specifically methylates the pseudouridine at position 1915 (m3Psi1915) in 23S rRNA. The polypeptide is Ribosomal RNA large subunit methyltransferase H (Geobacillus thermodenitrificans (strain NG80-2)).